The chain runs to 750 residues: Cation-transporting P-type ATPase B (750 aa).

Positions 17–80 constitute an HMA domain; sequence RRIQLDVAGM…VIEQAGYRAT (64 aa). 2 residues coordinate a metal cation: cysteine 28 and cysteine 31. 6 consecutive transmembrane segments (helical) span residues 104–124, 129–149, 167–187, 200–220, 360–380, and 389–409; these read LIVAALLFVPLADLSTMFAIV, FPGWGYLLTALAAPIVTWAAW, ETLISAGILAATGWSLSTIFV, AILHSDSIYFEVAAGVTVFVL, IAAVFVPMVFVIAGLAGASWL, and AFSVVLGVLVIACPCTLGLAT. The 4-aspartylphosphate intermediate role is filled by aspartate 445. A run of 6 helical transmembrane segments spans residues 471–491, 500–520, 547–567, 663–683, 693–713, and 715–735; these read VLALASAVEAASEHSVATAIV, VADFVAFAGCGVSGVVAEHHV, SRGETVVFVSVDGVACGAVAI, VAIGAADLILVRDSLGVVPVA, TIRINMIWAFGYNVAAIPIAS, and GLLNPLIAGAAMAFSSFFVVS.

This sequence belongs to the cation transport ATPase (P-type) (TC 3.A.3) family. Type IB subfamily.

It is found in the cell membrane. The catalysed reaction is ATP + H2O = ADP + phosphate + H(+). This is Cation-transporting P-type ATPase B (ctpB) from Mycobacterium leprae (strain TN).